A 104-amino-acid chain; its full sequence is MDSNKITFFTRFEQDILAGRKTITIRDKSESSFQPNQILAVYTNETDRFFANIKVLSVTPIHFEALSEAHAQQENMTLPELRQVIKEIYPQEDCFWVIAFELVD.

One can recognise an ASCH domain in the interval 7-104 (TFFTRFEQDI…FWVIAFELVD (98 aa)). K21 acts as the Proton acceptor in catalysis. Catalysis depends on T24, which acts as the Nucleophile. Catalysis depends on E74, which acts as the Proton donor.

The protein belongs to the N(4)-acetylcytidine amidohydrolase family.

It carries out the reaction N(4)-acetylcytidine + H2O = cytidine + acetate + H(+). The enzyme catalyses N(4)-acetyl-2'-deoxycytidine + H2O = 2'-deoxycytidine + acetate + H(+). It catalyses the reaction N(4)-acetylcytosine + H2O = cytosine + acetate + H(+). Functionally, catalyzes the hydrolysis of N(4)-acetylcytidine (ac4C). This Pasteurella multocida (strain Pm70) protein is N(4)-acetylcytidine amidohydrolase.